The following is a 47-amino-acid chain: Ruminococcin-A (47 aa).

The N-terminal stretch at 1 to 23 is a signal peptide; sequence MRNDVLTLTNPMEEKELEQILGG. 2 positions are modified to 2,3-didehydrobutyrine: Thr-30 and Thr-39. The beta-methyllanthionine (Thr-Cys) cross-link spans 30–35; that stretch reads TISHEC. Positions 32–46 form a cross-link, lanthionine (Ser-Cys); sequence SHECNMNTWQFLFTC. A cross-link (beta-methyllanthionine (Thr-Cys)) is located at residues 45–47; the sequence is TCC.

In terms of processing, maturation of lantibiotics involves the enzymatic conversion of Thr, and Ser into dehydrated AA and the formation of thioether bonds with cysteine. This is followed by membrane translocation and cleavage of the modified precursor. It is not established whether the 2,3-didehydrobutyrine is the E- or Z-isomer.

It localises to the secreted. Its function is as follows. Lanthionine-containing peptide antibiotic (lantibiotic) active on Gram-positive bacteria. The bactericidal activity of lantibiotics is based on depolarization of energized bacterial cytoplasmic membranes, initiated by the formation of aqueous transmembrane pores. Ruminococcin A is a broad spectrum bacteriocin exhibiting activity against a wide range of pathogenic clostridia and B.longum. This chain is Ruminococcin-A (rumA1), found in Mediterraneibacter gnavus (Ruminococcus gnavus).